A 201-amino-acid polypeptide reads, in one-letter code: Regulator of G-protein signaling 16 (201 aa).

2 S-palmitoyl cysteine lipidation sites follow: C2 and C12. Residues 64-180 (SFDLLLNSKN…LKSPAYRDLA (117 aa)) enclose the RGS domain. A Phosphotyrosine; by EGFR modification is found at Y167. Phosphotyrosine is present on Y176. The disordered stretch occupies residues 181–201 (AQASATSTSAPSGSPAEPSHT).

Interacts with GNAI1 and GNAQ. Interacts with GNAI3, GNAI3 and GNAO1. Post-translationally, palmitoylated on Cys-2 and/or Cys-12. In terms of processing, phosphorylated. Phosphorylation at Tyr-167 by EGFR enhances GTPase accelerating (GAP) activity toward GNAI1. As to expression, retinal; also predominantly expressed in the liver and pituitary.

The protein resides in the membrane. Regulates G protein-coupled receptor signaling cascades. Inhibits signal transduction by increasing the GTPase activity of G protein alpha subunits, thereby driving them into their inactive GDP-bound form. Plays an important role in the phototransduction cascade by regulating the lifetime and effective concentration of activated transducin alpha. May regulate extra and intracellular mitogenic signals. This Mus musculus (Mouse) protein is Regulator of G-protein signaling 16 (Rgs16).